A 566-amino-acid polypeptide reads, in one-letter code: Mitochondrial distribution and morphology protein 34 (566 aa).

One can recognise an SMP-LTD domain in the interval Met1–Leu195. Disordered stretches follow at residues Pro212–Gly237, Gly349–Val401, Pro432–Thr518, and Lys539–Gln566. The segment covering Arg358–Arg370 has biased composition (basic residues). The segment covering Thr380–Val401 has biased composition (polar residues). Basic and acidic residues predominate over residues Pro444 to Arg454.

The protein belongs to the MDM34 family. In terms of assembly, component of the ER-mitochondria encounter structure (ERMES) or MDM complex, composed of mmm1, mdm10, mdm12 and mdm34.

Its subcellular location is the mitochondrion outer membrane. Component of the ERMES/MDM complex, which serves as a molecular tether to connect the endoplasmic reticulum (ER) and mitochondria. Components of this complex are involved in the control of mitochondrial shape and protein biogenesis, and function in nonvesicular lipid trafficking between the ER and mitochondria. Mdm34 is required for the interaction of the ER-resident membrane protein mmm1 and the outer mitochondrial membrane-resident beta-barrel protein mdm10. This is Mitochondrial distribution and morphology protein 34 from Aspergillus flavus (strain ATCC 200026 / FGSC A1120 / IAM 13836 / NRRL 3357 / JCM 12722 / SRRC 167).